A 309-amino-acid chain; its full sequence is tRNA dimethylallyltransferase (309 aa).

Residue 10–17 (GPTAVGKT) participates in ATP binding. 12–17 (TAVGKT) is a binding site for substrate. The interaction with substrate tRNA stretch occupies residues 35–38 (DSMQ).

The protein belongs to the IPP transferase family. As to quaternary structure, monomer. Mg(2+) is required as a cofactor.

It carries out the reaction adenosine(37) in tRNA + dimethylallyl diphosphate = N(6)-dimethylallyladenosine(37) in tRNA + diphosphate. Catalyzes the transfer of a dimethylallyl group onto the adenine at position 37 in tRNAs that read codons beginning with uridine, leading to the formation of N6-(dimethylallyl)adenosine (i(6)A). The sequence is that of tRNA dimethylallyltransferase from Clostridium botulinum (strain Eklund 17B / Type B).